The chain runs to 831 residues: Translation initiation factor IF-2 (831 aa).

The 171-residue stretch at 329-499 folds into the tr-type G domain; sequence TRAPVVTVMG…LLIAEMQDLK (171 aa). Residues 338 to 345 are G1; sequence GHVDHGKT. 338–345 lines the GTP pocket; the sequence is GHVDHGKT. The G2 stretch occupies residues 363-367; that stretch reads GITQH. The G3 stretch occupies residues 385–388; sequence DTPG. GTP-binding positions include 385–389 and 439–442; these read DTPGH and NKID. Residues 439–442 form a G4 region; sequence NKID. Residues 475 to 477 are G5; the sequence is SAL.

It belongs to the TRAFAC class translation factor GTPase superfamily. Classic translation factor GTPase family. IF-2 subfamily.

The protein localises to the cytoplasm. In terms of biological role, one of the essential components for the initiation of protein synthesis. Protects formylmethionyl-tRNA from spontaneous hydrolysis and promotes its binding to the 30S ribosomal subunits. Also involved in the hydrolysis of GTP during the formation of the 70S ribosomal complex. This Rickettsia rickettsii (strain Iowa) protein is Translation initiation factor IF-2.